Reading from the N-terminus, the 166-residue chain is Large ribosomal subunit protein uL10 (166 aa).

Belongs to the universal ribosomal protein uL10 family. In terms of assembly, part of the ribosomal stalk of the 50S ribosomal subunit. The N-terminus interacts with L11 and the large rRNA to form the base of the stalk. The C-terminus forms an elongated spine to which L12 dimers bind in a sequential fashion forming a multimeric L10(L12)X complex.

Forms part of the ribosomal stalk, playing a central role in the interaction of the ribosome with GTP-bound translation factors. This Ureaplasma parvum serovar 3 (strain ATCC 27815 / 27 / NCTC 11736) protein is Large ribosomal subunit protein uL10.